The following is a 308-amino-acid chain: D-alanine--D-alanine ligase (308 aa).

Residues 105–302 enclose the ATP-grasp domain; the sequence is KAIFRSLGLA…FPDLCDRILD (198 aa). 133-188 lines the ATP pocket; it reads DLPFGLPCVVKPAGEGSSVGVHLVNAAAELGPACRDAAGYAGDVIVERYVKGTEVD. Mg(2+)-binding residues include Asp256, Glu269, and Asn271.

This sequence belongs to the D-alanine--D-alanine ligase family. It depends on Mg(2+) as a cofactor. Mn(2+) serves as cofactor.

Its subcellular location is the cytoplasm. The catalysed reaction is 2 D-alanine + ATP = D-alanyl-D-alanine + ADP + phosphate + H(+). The protein operates within cell wall biogenesis; peptidoglycan biosynthesis. In terms of biological role, cell wall formation. This chain is D-alanine--D-alanine ligase, found in Anaeromyxobacter dehalogenans (strain 2CP-C).